Consider the following 140-residue polypeptide: ATP synthase epsilon chain 1 (140 aa).

Belongs to the ATPase epsilon chain family. In terms of assembly, F-type ATPases have 2 components, CF(1) - the catalytic core - and CF(0) - the membrane proton channel. CF(1) has five subunits: alpha(3), beta(3), gamma(1), delta(1), epsilon(1). CF(0) has three main subunits: a, b and c.

Its subcellular location is the cell inner membrane. Its function is as follows. Produces ATP from ADP in the presence of a proton gradient across the membrane. This chain is ATP synthase epsilon chain 1, found in Methylococcus capsulatus (strain ATCC 33009 / NCIMB 11132 / Bath).